The primary structure comprises 283 residues: Light-independent protochlorophyllide reductase iron-sulfur ATP-binding protein (283 aa).

ATP is bound by residues 15–20 (GIGKST) and K44. S19 is a Mg(2+) binding site. 2 residues coordinate [4Fe-4S] cluster: C100 and C134. ATP is bound at residue 185–186 (NR).

The protein belongs to the NifH/BchL/ChlL family. In terms of assembly, homodimer. Protochlorophyllide reductase is composed of three subunits; ChlL, ChlN and ChlB. [4Fe-4S] cluster serves as cofactor.

It catalyses the reaction chlorophyllide a + oxidized 2[4Fe-4S]-[ferredoxin] + 2 ADP + 2 phosphate = protochlorophyllide a + reduced 2[4Fe-4S]-[ferredoxin] + 2 ATP + 2 H2O. It participates in porphyrin-containing compound metabolism; chlorophyll biosynthesis (light-independent). Functionally, component of the dark-operative protochlorophyllide reductase (DPOR) that uses Mg-ATP and reduced ferredoxin to reduce ring D of protochlorophyllide (Pchlide) to form chlorophyllide a (Chlide). This reaction is light-independent. The L component serves as a unique electron donor to the NB-component of the complex, and binds Mg-ATP. The polypeptide is Light-independent protochlorophyllide reductase iron-sulfur ATP-binding protein (Synechococcus sp. (strain JA-2-3B'a(2-13)) (Cyanobacteria bacterium Yellowstone B-Prime)).